Consider the following 999-residue polypeptide: Hypoxia up-regulated protein 1 (999 aa).

A signal peptide spans 1-32; the sequence is MADKVRRQRPRRRVCWALVAVLLADLLALSDT. N-linked (GlcNAc...) asparagine glycosylation is found at asparagine 155, asparagine 222, and asparagine 515. The residue at position 567 (serine 567) is a Phosphoserine. The disordered stretch occupies residues 578 to 694; the sequence is GNTISSLFGG…KKQKPARKRR (117 aa). An N-linked (GlcNAc...) asparagine glycan is attached at asparagine 596. Composition is skewed to basic and acidic residues over residues 611–626 and 641–672; these read GSKDEPGEQVELKEEA and PKGDATPEGEKATEKENGDKSEAQKPSEKAEA. 3 N-linked (GlcNAc...) asparagine glycosylation sites follow: asparagine 830, asparagine 862, and asparagine 869. The residue at position 883 (lysine 883) is an N6-acetyllysine. Residues 909-999 form a disordered region; sequence AKFTKPRPRP…QKRPLKNDEL (91 aa). Asparagine 922 and asparagine 931 each carry an N-linked (GlcNAc...) asparagine glycan. The Prevents secretion from ER motif lies at 996 to 999; the sequence is NDEL.

Belongs to the heat shock protein 70 family. In terms of assembly, part of a large chaperone multiprotein complex comprising DNAJB11, HSP90B1, HSPA5, HYOU, PDIA2, PDIA4, PDIA6, PPIB, SDF2L1, UGGT1 and very small amounts of ERP29, but not, or at very low levels, CALR nor CANX. As to expression, highly expressed in tissues that contain well-developed endoplasmic reticulum and synthesize large amounts of secretory proteins. Highly expressed in liver and pancreas and lower expression in brain and kidney. Also expressed in macrophages within aortic atherosclerotic plaques, and in breast cancers.

Its subcellular location is the endoplasmic reticulum lumen. Functionally, has a pivotal role in cytoprotective cellular mechanisms triggered by oxygen deprivation. Promotes HSPA5/BiP-mediated ATP nucleotide exchange and thereby activates the unfolded protein response (UPR) pathway in the presence of endoplasmic reticulum stress. May play a role as a molecular chaperone and participate in protein folding. This Homo sapiens (Human) protein is Hypoxia up-regulated protein 1 (HYOU1).